Consider the following 141-residue polypeptide: Large ribosomal subunit protein uL11 (141 aa).

This sequence belongs to the universal ribosomal protein uL11 family. As to quaternary structure, part of the ribosomal stalk of the 50S ribosomal subunit. Interacts with L10 and the large rRNA to form the base of the stalk. L10 forms an elongated spine to which L12 dimers bind in a sequential fashion forming a multimeric L10(L12)X complex. One or more lysine residues are methylated.

Forms part of the ribosomal stalk which helps the ribosome interact with GTP-bound translation factors. The protein is Large ribosomal subunit protein uL11 of Ruegeria sp. (strain TM1040) (Silicibacter sp.).